Here is a 7785-residue protein sequence, read N- to C-terminus: Probable non-canonical nonribosomal peptide synthetase (NRPS) CymA (7785 aa).

3 consecutive Carrier domains span residues 487-562 (TARS…QRQE), 1908-1983 (HART…SEQQ), and 2958-3033 (SPGM…LEGG). O-(pantetheine 4'-phosphoryl)serine is present on residues Ser-522, Ser-1943, and Ser-2993. The stretch at 3088-3111 (RLALADVVVRHEALRTVFAERAGN) is one LRR 1 repeat. Carrier domains lie at 3978 to 4053 (APRT…SEQQ), 5002 to 5077 (EPRT…LEAN), and 6389 to 6464 (GPRD…AQGS). Residues Ser-4013, Ser-5037, and Ser-6424 each carry the O-(pantetheine 4'-phosphoryl)serine modification. One copy of the LRR 2 repeat lies at 6853 to 6875 (TGVSRVDLSVNAIETFDDHGLPA). The region spanning 7432–7507 (GPRTPQEEIL…QLAEQLGSDG (76 aa)) is the Carrier 7 domain. The residue at position 7467 (Ser-7467) is an O-(pantetheine 4'-phosphoryl)serine.

Requires pantetheine 4'-phosphate as cofactor.

Probable non-canonical nonribosomal peptide synthetase (NRPS); part of the gene cluster that mediates the biosynthesis of cyclic heptapeptides, known as cyclomarins and also of cyclic dipeptides, called cyclomarazines, which have both antimicrobial and cytotoxic effects. First, CymD catalyzes the reverse N-prenylation of monomeric L-tryptophan with dimethylallyl diphosphate (DMAPP) to form N-(1,1-dimethylallyl)-tryptophan (r-N-DMAT). The N-(1,1-dimethylallyl)-tryptophan produced by CymD is then combined with a range of standard and nonproteinogenic amino acid substrates to synthesize the peptides, a process that is probably catalyzed by the non-canonical nonribosomal peptide synthetase (NRPS), CymA. Other proteins in the cluster catalyze further modifications of the peptides including CymV which catalyzes the oxidation of olefinic cyclomarins and cyclomarazines to their respective epoxide derivatives. The polypeptide is Probable non-canonical nonribosomal peptide synthetase (NRPS) CymA (Salinispora arenicola (strain CNS-205)).